The primary structure comprises 293 residues: Energy-coupling factor transporter ATP-binding protein EcfA2 (293 aa).

The ABC transporter domain occupies 3 to 246 (ITFQKVEHRY…ADELEKIGVD (244 aa)). Residue 40-47 (GHTGSGKS) coordinates ATP.

It belongs to the ABC transporter superfamily. Energy-coupling factor EcfA family. As to quaternary structure, forms a stable energy-coupling factor (ECF) transporter complex composed of 2 membrane-embedded substrate-binding proteins (S component), 2 ATP-binding proteins (A component) and 2 transmembrane proteins (T component).

The protein resides in the cell membrane. In terms of biological role, ATP-binding (A) component of a common energy-coupling factor (ECF) ABC-transporter complex. Unlike classic ABC transporters this ECF transporter provides the energy necessary to transport a number of different substrates. The sequence is that of Energy-coupling factor transporter ATP-binding protein EcfA2 from Bacillus anthracis.